Reading from the N-terminus, the 400-residue chain is Na(+)/H(+) antiporter NhaA (400 aa).

The next 12 helical transmembrane spans lie at Leu-18 to Ile-38, Val-68 to Ile-88, Leu-105 to Ser-125, Gly-133 to Leu-153, Val-163 to Phe-183, Ser-186 to Phe-206, Val-211 to Ser-231, Gly-232 to Ser-252, Gly-267 to Val-287, Ile-305 to Val-325, Trp-338 to Ile-358, and Ala-372 to Leu-392.

It belongs to the NhaA Na(+)/H(+) (TC 2.A.33) antiporter family.

The protein resides in the cell inner membrane. The catalysed reaction is Na(+)(in) + 2 H(+)(out) = Na(+)(out) + 2 H(+)(in). Functionally, na(+)/H(+) antiporter that extrudes sodium in exchange for external protons. This is Na(+)/H(+) antiporter NhaA from Pseudomonas entomophila (strain L48).